The following is a 730-amino-acid chain: Actin filament-associated protein 1 (730 aa).

Position 1 is an N-acetylmethionine (Met1). The interval Lys47–Glu91 is disordered. Residues Pro60–Pro85 show a composition bias toward pro residues. Residues Pro71–Trp74 carry the SH3-binding motif. Positions Tyr94–Ala97 match the SH2-binding 1 motif. Residues Ser119 to Gln140 are disordered. The PH 1 domain occupies Asp153–Ser249. The segment at Ser252–Gly292 is disordered. The span at His268–Ser283 shows a compositional bias: basic and acidic residues. Residues Ser282 and Ser283 each carry the phosphoserine modification. A PH 2 domain is found at Asp347 to Gly441. Positions Tyr451–Val456 match the SH2-binding 2 motif. The disordered stretch occupies residues Lys512–Ala537. A Phosphoserine modification is found at Ser548. Residues Lys557–Ala648 adopt a coiled-coil conformation. An interaction with F-actin region spans residues Asp594 to Thr637. Phosphoserine occurs at positions 664, 665, and 668. A Phosphothreonine modification is found at Thr675. Phosphoserine is present on residues Ser679 and Ser687.

As to quaternary structure, monomer and homomultimer. Interacts via its C-terminus with F-actin; probably involving AFAP1 multimers. Interacts with activated SRC SH3-SH2 domains. Interacts via its PH 1 domain with PRKCA, PRKCB and PRKCI. In terms of processing, phosphorylated on tyrosine residues by SRC. As to expression, low expression in normal breast epithelial cell line MCF-10A and in tumorigenic breast cancer cell lines MCF-7, T-47D and ZR-75-1. Highly expressed in the invasive breast cancer cell lines MDA-MB-231 and MDA-MB-435. Overexpressed in prostate carcinoma.

The protein localises to the cytoplasm. It localises to the cytoskeleton. It is found in the stress fiber. In terms of biological role, can cross-link actin filaments into both network and bundle structures. May modulate changes in actin filament integrity and induce lamellipodia formation. May function as an adapter molecule that links other proteins, such as SRC and PKC to the actin cytoskeleton. Seems to play a role in the development and progression of prostate adenocarcinoma by regulating cell-matrix adhesions and migration in the cancer cells. This Homo sapiens (Human) protein is Actin filament-associated protein 1 (AFAP1).